Reading from the N-terminus, the 724-residue chain is Ribosomal RNA processing protein 1 homolog B (724 aa).

The interval 331–576 is disordered; it reads NGAPLSSAED…SKKKKKTMKL (246 aa). 2 positions are modified to phosphoserine: S336 and S370. Over residues 373–386 the composition is skewed to basic residues; that stretch reads HIHKKKRKKRKRSH. Residues S432 and S438 each carry the phosphoserine modification. Residues 448–461 are compositionally biased toward basic residues; it reads HNKRKRPRKKKLRA. Residues 483-496 are compositionally biased toward low complexity; that stretch reads SGHSQSSAAHISSS. Position 494 is a phosphoserine (S494). 2 stretches are compositionally biased toward polar residues: residues 513-528 and 548-564; these read DSSS…TPTS and KTAS…SQKP. K618 is subject to N6-acetyllysine. The interval 625 to 649 is disordered; that stretch reads AKNSSATRPQGPAGQLNKTPSSSKK. The span at 640–649 shows a compositional bias: polar residues; it reads LNKTPSSSKK. Residues S668 and S672 each carry the phosphoserine modification. Position 678 is a citrulline (R678). The disordered stretch occupies residues 687 to 724; the sequence is PLHGVLKTATSSPASTPLSPMRLPATTPKRRPRAADFF. T694 is modified (phosphothreonine). Low complexity predominate over residues 694–706; that stretch reads TATSSPASTPLSP. A phosphoserine mark is found at S698 and S701.

This sequence belongs to the RRP1 family. As to quaternary structure, interacts with the transcriptional activator E2F1. Interacts with serine/threonine-protein phosphatase PP1 subunits PPP1CB and PPP1CC but not with PPP1CA. Interacts with 60S ribosomal proteins RPL5 and RPL27, ribosomal processing protein RRP1/NNP1 and other nucleolar proteins including NOP2/NOL1 and FBL. Also interacts with nucleolar protein NPM1/B23. Interacts with splicing factor SRSF1 and LUC7L3/CROP. Interacts with GTPase activator SIPA1. Interacts with H1-10, NCL, PARP1, TRIM28 and YBX3. Post-translationally, citrullinated by PADI4.

Its subcellular location is the nucleus. The protein localises to the nucleolus. It localises to the nucleoplasm. It is found in the chromosome. Functionally, positively regulates DNA damage-induced apoptosis by acting as a transcriptional coactivator of proapoptotic target genes of the transcriptional activator E2F1. Likely to play a role in ribosome biogenesis by targeting serine/threonine protein phosphatase PP1 to the nucleolus. Involved in regulation of mRNA splicing. Inhibits SIPA1 GTPase activity. Involved in regulating expression of extracellular matrix genes. Associates with chromatin and may play a role in modulating chromatin structure. The sequence is that of Ribosomal RNA processing protein 1 homolog B (Rrp1b) from Mus musculus (Mouse).